A 438-amino-acid polypeptide reads, in one-letter code: Battenin (438 aa).

The segment at 1–25 (MGGCAGSRRRLSDSEGEETVPEPRL) is disordered. Residues 1–37 (MGGCAGSRRRLSDSEGEETVPEPRLPLLDHQGAHWKN) lie on the Cytoplasmic side of the membrane. 2 positions are modified to phosphoserine: S12 and S14. A helical transmembrane segment spans residues 38–58 (AVGFWLLGLCNNFSYVVMLSA). The Lumenal portion of the chain corresponds to 59 to 127 (AHDILSHERT…GLHLLPYSPR (69 aa)). 2 N-linked (GlcNAc...) asparagine glycosylation sites follow: N71 and N85. A helical transmembrane segment spans residues 128-148 (VLVSGICAAGSFVLVAFSHSV). The Cytoplasmic segment spans residues 149 to 151 (GTS). Residues 152-172 (LCGVVLASISSGLGEVTFLSL) traverse the membrane as a helical segment. At 173–182 (TAFYPRAVIS) the chain is on the lumenal side. Residues 183–203 (WWSSGTGGAGLLGALSYLGLT) form a helical membrane-spanning segment. Over 204–277 (QAGLSPQQTL…SLSLRERWTV (74 aa)) the chain is Cytoplasmic. Positions 237–268 (QDPGGEEEAESSARQPLIRTEAPESKPGSSSS) are disordered. The Lysosomal targeting motif motif lies at 242 to 244 (EEE). The short motif at 253–254 (LI) is the Lysosomal targeting motif. Required for AP1G1, AP2A2 and AP3D1 interaction element. A helical membrane pass occupies residues 278–298 (FKGLLWYIVPLVVVYFAEYFI). At 299–346 (NQGLFELLFFRNTSLSHAQQYRWYQMLYQAGVFASRSSLRCCHIRFTW) the chain is on the lumenal side. N310 is a glycosylation site (N-linked (GlcNAc...) asparagine). Residues 347 to 367 (ALALLQCLNLAFLLADVWFGF) form a helical membrane-spanning segment. The Cytoplasmic segment spans residues 368-438 (LLSIYFVFLI…PLHDFLCQLS (71 aa)). Positions 409 to 419 (MATTCISDTLG) match the Lysosomal targeting motif motif. Cysteine methyl ester is present on C435. A lipid anchor (S-farnesyl cysteine) is attached at C435. The propeptide at 436 to 438 (QLS) is removed in mature form.

The protein belongs to the battenin family. In terms of assembly, interacts with DCTN1, KIF3A, RAB7A and RILP. Interacts with CLN5. Highly glycosylated. Post-translationally, farnesylation is important for trafficking to lysosomes.

The protein localises to the lysosome membrane. It localises to the late endosome. The protein resides in the lysosome. Functionally, mediates microtubule-dependent, anterograde transport connecting the Golgi network, endosomes, autophagosomes, lysosomes and plasma membrane, and participates in several cellular processes such as regulation of lysosomal pH, lysosome protein degradation, receptor-mediated endocytosis, autophagy, transport of proteins and lipids from the TGN, apoptosis and synaptic transmission. Facilitates the proteins transport from trans-Golgi network (TGN)-to other membrane compartments such as transport of microdomain-associated proteins to the plasma membrane, IGF2R transport to the lysosome where it regulates the CTSD release leading to regulation of CTSD maturation and thereby APP intracellular processing. Moreover regulates CTSD activity in response to osmotic stress. Also binds galactosylceramide and transports it from the trans Golgi to the rafts, which may have immediate and downstream effects on cell survival by modulating ceramide synthesis. At the plasma membrane, regulates actin-dependent events including filopodia formation, cell migration, and pinocytosis through ARF1-CDC42 pathway and also the cytoskeleton organization through interaction with MYH10 and fodrin leading to the regulation of the plasma membrane association of Na+, K+ ATPase complex. Regulates synaptic transmission in the amygdala, hippocampus, and cerebellum through regulation of synaptic vesicles density and their proximity to active zones leading to modulation of short-term plasticity and age-dependent anxious behavior, learning and memory. Regulates autophagic vacuoles (AVs) maturation by modulating the trafficking between endocytic and autophagolysosomal/lysosomal compartments, which involves vesicle fusion leading to regulation of degradation process. Also participates in cellular homeostasis of compounds such as, water, ions, amino acids, proteins and lipids in several tissue namely in brain and kidney through regulation of their transport and synthesis. This is Battenin from Macaca fascicularis (Crab-eating macaque).